Here is a 185-residue protein sequence, read N- to C-terminus: Ribosome-recycling factor (185 aa).

This sequence belongs to the RRF family.

The protein resides in the cytoplasm. Responsible for the release of ribosomes from messenger RNA at the termination of protein biosynthesis. May increase the efficiency of translation by recycling ribosomes from one round of translation to another. This Aliivibrio fischeri (strain MJ11) (Vibrio fischeri) protein is Ribosome-recycling factor.